A 137-amino-acid polypeptide reads, in one-letter code: Small ribosomal subunit protein uS9 (137 aa).

The span at 105 to 117 shows a compositional bias: basic and acidic residues; the sequence is LKIEGHLSRDPRA. The tract at residues 105–137 is disordered; the sequence is LKIEGHLSRDPRAKERRKYGLKKARKAPQFSKR. Positions 118–137 are enriched in basic residues; it reads KERRKYGLKKARKAPQFSKR.

It belongs to the universal ribosomal protein uS9 family.

The chain is Small ribosomal subunit protein uS9 from Prochlorococcus marinus (strain MIT 9211).